The chain runs to 217 residues: Pyridoxine/pyridoxamine 5'-phosphate oxidase (217 aa).

Residues 13-16 and K71 each bind substrate; that span reads RREY. FMN is bound by residues 66–71, 81–82, R87, K88, and Q110; these read RIVLLK and YT. 3 residues coordinate substrate: Y128, R132, and S136. FMN-binding positions include 145–146 and W190; that span reads QS. 196–198 contacts substrate; that stretch reads RLH. R200 lines the FMN pocket.

It belongs to the pyridoxamine 5'-phosphate oxidase family. Homodimer. The cofactor is FMN.

The catalysed reaction is pyridoxamine 5'-phosphate + O2 + H2O = pyridoxal 5'-phosphate + H2O2 + NH4(+). It catalyses the reaction pyridoxine 5'-phosphate + O2 = pyridoxal 5'-phosphate + H2O2. It functions in the pathway cofactor metabolism; pyridoxal 5'-phosphate salvage; pyridoxal 5'-phosphate from pyridoxamine 5'-phosphate: step 1/1. It participates in cofactor metabolism; pyridoxal 5'-phosphate salvage; pyridoxal 5'-phosphate from pyridoxine 5'-phosphate: step 1/1. In terms of biological role, catalyzes the oxidation of either pyridoxine 5'-phosphate (PNP) or pyridoxamine 5'-phosphate (PMP) into pyridoxal 5'-phosphate (PLP). This Yersinia enterocolitica serotype O:8 / biotype 1B (strain NCTC 13174 / 8081) protein is Pyridoxine/pyridoxamine 5'-phosphate oxidase.